A 201-amino-acid polypeptide reads, in one-letter code: ADP-ribosylation factor-related protein 1 (201 aa).

An N-acetylmethionine modification is found at Met-1. Residues 24–31 (GLDNAGKT), 75–79 (DLGGQ), and 134–137 (NKQD) contribute to the GTP site.

It belongs to the small GTPase superfamily. Arf family. As to quaternary structure, interacts with SYS1.

The protein localises to the golgi apparatus. It localises to the trans-Golgi network. In terms of biological role, trans-Golgi-associated GTPase that regulates protein sorting. Controls the targeting of ARL1 and its effector to the trans-Golgi. Required for the lipidation of chylomicrons in the intestine and required for VLDL lipidation in the liver. This Bos taurus (Bovine) protein is ADP-ribosylation factor-related protein 1 (ARFRP1).